A 541-amino-acid polypeptide reads, in one-letter code: Formimidoyltransferase-cyclodeaminase (541 aa).

The segment at M1 to F181 is formiminotransferase N-subdomain. H82 acts as the For formimidoyltransferase activity in catalysis. G163 to G172 is a folate binding site. Residues L182–V326 form a formiminotransferase C-subdomain region. The interval Q327 to G334 is linker. The cyclodeaminase/cyclohydrolase stretch occupies residues L335–A541. Residue D412 is the For cyclodeaminase activity of the active site.

In the C-terminal section; belongs to the cyclodeaminase/cyclohydrolase family. It in the N-terminal section; belongs to the formiminotransferase family. In terms of assembly, homooctamer, including four polyglutamate binding sites. The subunits are arranged as a tetramer of dimers, and form a planar ring-shaped structure.

The protein localises to the cytoplasm. The protein resides in the cytosol. Its subcellular location is the golgi apparatus. It localises to the cytoskeleton. It is found in the microtubule organizing center. The protein localises to the centrosome. The protein resides in the centriole. It catalyses the reaction 5-formimidoyltetrahydrofolate + L-glutamate = N-formimidoyl-L-glutamate + (6S)-5,6,7,8-tetrahydrofolate. It carries out the reaction 5-formimidoyltetrahydrofolate + 2 H(+) = (6R)-5,10-methenyltetrahydrofolate + NH4(+). It functions in the pathway amino-acid degradation; L-histidine degradation into L-glutamate; L-glutamate from N-formimidoyl-L-glutamate (transferase route): step 1/1. Folate-dependent enzyme, that displays both transferase and deaminase activity. Serves to channel one-carbon units from formiminoglutamate to the folate pool. In terms of biological role, binds and promotes bundling of vimentin filaments originating from the Golgi. This chain is Formimidoyltransferase-cyclodeaminase (FTCD), found in Gallus gallus (Chicken).